We begin with the raw amino-acid sequence, 192 residues long: Adenylate kinase (192 aa).

Residue 12–17 coordinates ATP; it reads GSGKTT. Residues 34–63 form an NMP region; the sequence is STGDLLRAEVASGSELGKTIDSFISKGNLV. Residues T35, R40, 61–63, 88–91, and Q95 contribute to the AMP site; these read NLV and GYPR. The interval 130–136 is LID; sequence GRNRGAD. R131 is a binding site for ATP. AMP-binding residues include R133 and R145. Position 173 (R173) interacts with ATP.

The protein belongs to the adenylate kinase family. Monomer.

Its subcellular location is the cytoplasm. It catalyses the reaction AMP + ATP = 2 ADP. It functions in the pathway purine metabolism; AMP biosynthesis via salvage pathway; AMP from ADP: step 1/1. Catalyzes the reversible transfer of the terminal phosphate group between ATP and AMP. Plays an important role in cellular energy homeostasis and in adenine nucleotide metabolism. This chain is Adenylate kinase, found in Campylobacter jejuni subsp. jejuni serotype O:2 (strain ATCC 700819 / NCTC 11168).